The following is an 897-amino-acid chain: Schlafen family member 13 (897 aa).

The segment at 2–355 is n'-domain region; sequence EANHCSLGVY…WVEKMMDADP (354 aa). Active-site residues include E208 and E213. Residues H284, C286, and C321 each coordinate Zn(2+). ATP is bound at residue 599–606; that stretch reads GLPGSGKT.

This sequence belongs to the Schlafen family. Subgroup III subfamily. Mg(2+) serves as cofactor.

The protein resides in the cytoplasm. Its function is as follows. Endoribonuclease that cleaves tRNAs and rRNAs. Cleaves tRNAs 11 nucleotides from the 3'-terminus at the acceptor stem. Does not act on tRNA(Sec). Able to restrict HIV-1 virus replication; ability to inhibit HIV-1 replication is dependent on endoribonuclease activity. The protein is Schlafen family member 13 of Homo sapiens (Human).